A 375-amino-acid chain; its full sequence is Actin, cytoplasmic (375 aa).

This sequence belongs to the actin family.

Its subcellular location is the cytoplasm. The protein resides in the cytoskeleton. The enzyme catalyses ATP + H2O = ADP + phosphate + H(+). Functionally, actins are highly conserved proteins that are involved in various types of cell motility and are ubiquitously expressed in all eukaryotic cells. The protein is Actin, cytoplasmic of Oxytricha trifallax (Sterkiella histriomuscorum).